Reading from the N-terminus, the 178-residue chain is Translation initiation factor IF-3 (178 aa).

It belongs to the IF-3 family. As to quaternary structure, monomer.

The protein resides in the cytoplasm. Its function is as follows. IF-3 binds to the 30S ribosomal subunit and shifts the equilibrium between 70S ribosomes and their 50S and 30S subunits in favor of the free subunits, thus enhancing the availability of 30S subunits on which protein synthesis initiation begins. In Legionella pneumophila (strain Paris), this protein is Translation initiation factor IF-3.